A 630-amino-acid chain; its full sequence is Elongation factor 4 (630 aa).

The tract at residues 1–22 (MTVARNRAGAGPGKGSPISSFA) is disordered. A tr-type G domain is found at 30 to 211 (ARIRNFCIIA…EVVRQVPAPV (182 aa)). Residues 42–47 (DHGKST) and 158–161 (NKID) each bind GTP.

The protein belongs to the TRAFAC class translation factor GTPase superfamily. Classic translation factor GTPase family. LepA subfamily.

It is found in the cell membrane. It carries out the reaction GTP + H2O = GDP + phosphate + H(+). In terms of biological role, required for accurate and efficient protein synthesis under certain stress conditions. May act as a fidelity factor of the translation reaction, by catalyzing a one-codon backward translocation of tRNAs on improperly translocated ribosomes. Back-translocation proceeds from a post-translocation (POST) complex to a pre-translocation (PRE) complex, thus giving elongation factor G a second chance to translocate the tRNAs correctly. Binds to ribosomes in a GTP-dependent manner. The polypeptide is Elongation factor 4 (Rhodococcus opacus (strain B4)).